The chain runs to 206 residues: Guanylate kinase (206 aa).

Residues 6-184 form the Guanylate kinase-like domain; it reads GTLYIISAPS…ALDDLKAIFR (179 aa). Position 13 to 20 (13 to 20) interacts with ATP; it reads APSGAGKS.

This sequence belongs to the guanylate kinase family.

The protein localises to the cytoplasm. The catalysed reaction is GMP + ATP = GDP + ADP. In terms of biological role, essential for recycling GMP and indirectly, cGMP. This chain is Guanylate kinase, found in Pseudomonas fluorescens (strain Pf0-1).